Consider the following 577-residue polypeptide: Arginine--tRNA ligase (577 aa).

Residues 122–132 (PNVAKEMHVGH) carry the 'HIGH' region motif.

Belongs to the class-I aminoacyl-tRNA synthetase family. Monomer.

The protein resides in the cytoplasm. The enzyme catalyses tRNA(Arg) + L-arginine + ATP = L-arginyl-tRNA(Arg) + AMP + diphosphate. The protein is Arginine--tRNA ligase of Citrobacter koseri (strain ATCC BAA-895 / CDC 4225-83 / SGSC4696).